The primary structure comprises 644 residues: Exoribonuclease 2 (644 aa).

The region spanning 189 to 516 (REDLTALDFV…NHRLLKAVIK (328 aa)) is the RNB domain. The S1 motif domain maps to 561–643 (DTRFAAEIVD…ETRSIIARPV (83 aa)).

This sequence belongs to the RNR ribonuclease family. RNase II subfamily.

It is found in the cytoplasm. It carries out the reaction Exonucleolytic cleavage in the 3'- to 5'-direction to yield nucleoside 5'-phosphates.. Involved in mRNA degradation. Hydrolyzes single-stranded polyribonucleotides processively in the 3' to 5' direction. This is Exoribonuclease 2 from Shigella dysenteriae serotype 1 (strain Sd197).